Consider the following 353-residue polypeptide: DNA-directed RNA polymerase subunit alpha (353 aa).

The tract at residues 1–234 is alpha N-terminal domain (alpha-NTD); sequence MVREKVTVST…DLFIPFLHTE (234 aa). Positions 267 to 353 are alpha C-terminal domain (alpha-CTD); the sequence is KRALKSIFID…LAQLIDSKSG (87 aa).

This sequence belongs to the RNA polymerase alpha chain family. In plastids the minimal PEP RNA polymerase catalytic core is composed of four subunits: alpha, beta, beta', and beta''. When a (nuclear-encoded) sigma factor is associated with the core the holoenzyme is formed, which can initiate transcription.

Its subcellular location is the plastid. It localises to the chloroplast. It carries out the reaction RNA(n) + a ribonucleoside 5'-triphosphate = RNA(n+1) + diphosphate. DNA-dependent RNA polymerase catalyzes the transcription of DNA into RNA using the four ribonucleoside triphosphates as substrates. The chain is DNA-directed RNA polymerase subunit alpha from Daucus carota (Wild carrot).